The primary structure comprises 759 residues: Putative ATP-dependent DNA helicase YjcD (759 aa).

The segment at 68–121 (ACEPKPSKEGKKEDDQESGVIRLPKGKAIAADPSPAVTEWHRPRSIKPGTPFVP) is disordered. Basic and acidic residues predominate over residues 69-81 (CEPKPSKEGKKED). The UvrD-like helicase ATP-binding domain maps to 134 to 413 (VGLNTDQLKA…IYLTANYRST (280 aa)). ATP-binding positions include 158-163 (GSGKTR) and Arg-411. In terms of domain architecture, UvrD-like helicase C-terminal spans 414-676 (HPIVSSADIV…QLMTIHRSKG (263 aa)).

It belongs to the helicase family. UvrD subfamily.

The protein resides in the cytoplasm. The enzyme catalyses Couples ATP hydrolysis with the unwinding of duplex DNA by translocating in the 3'-5' direction.. The catalysed reaction is ATP + H2O = ADP + phosphate + H(+). Functionally, may be involved in the generation of recombinogenic substrates for the subsequent action of RecA. This is Putative ATP-dependent DNA helicase YjcD (yjcD) from Bacillus subtilis (strain 168).